The primary structure comprises 266 residues: Small ribosomal subunit protein uS3 (266 aa).

Residues V39–R107 form the KH type-2 domain. The interval P214–E266 is disordered. Composition is skewed to basic and acidic residues over residues R230–E241 and G257–E266.

This sequence belongs to the universal ribosomal protein uS3 family. Part of the 30S ribosomal subunit. Forms a tight complex with proteins S10 and S14.

Functionally, binds the lower part of the 30S subunit head. Binds mRNA in the 70S ribosome, positioning it for translation. This is Small ribosomal subunit protein uS3 from Burkholderia thailandensis (strain ATCC 700388 / DSM 13276 / CCUG 48851 / CIP 106301 / E264).